The chain runs to 349 residues: Protein RecA (349 aa).

Position 65–72 (65–72) interacts with ATP; the sequence is GPESSGKT.

Belongs to the RecA family.

Its subcellular location is the cytoplasm. Can catalyze the hydrolysis of ATP in the presence of single-stranded DNA, the ATP-dependent uptake of single-stranded DNA by duplex DNA, and the ATP-dependent hybridization of homologous single-stranded DNAs. It interacts with LexA causing its activation and leading to its autocatalytic cleavage. The polypeptide is Protein RecA (Enterococcus faecium (Streptococcus faecium)).